Here is a 258-residue protein sequence, read N- to C-terminus: Ribosomal RNA small subunit methyltransferase J (258 aa).

Residues 107-108, 123-124, 159-160, and aspartate 177 each bind S-adenosyl-L-methionine; these read RD, ER, and SS.

This sequence belongs to the methyltransferase superfamily. RsmJ family.

It is found in the cytoplasm. The enzyme catalyses guanosine(1516) in 16S rRNA + S-adenosyl-L-methionine = N(2)-methylguanosine(1516) in 16S rRNA + S-adenosyl-L-homocysteine + H(+). Its function is as follows. Specifically methylates the guanosine in position 1516 of 16S rRNA. The protein is Ribosomal RNA small subunit methyltransferase J of Shewanella sediminis (strain HAW-EB3).